The sequence spans 231 residues: Translin-associated protein X homolog (231 aa).

This sequence belongs to the translin family.

Its subcellular location is the cytoplasm. It localises to the nucleus. The polypeptide is Translin-associated protein X homolog (Schizosaccharomyces pombe (strain 972 / ATCC 24843) (Fission yeast)).